A 616-amino-acid chain; its full sequence is Chaperone protein HscA homolog (616 aa).

The protein belongs to the heat shock protein 70 family.

Functionally, chaperone involved in the maturation of iron-sulfur cluster-containing proteins. Has a low intrinsic ATPase activity which is markedly stimulated by HscB. The protein is Chaperone protein HscA homolog of Tolumonas auensis (strain DSM 9187 / NBRC 110442 / TA 4).